The following is a 315-amino-acid chain: Methionyl-tRNA formyltransferase (315 aa).

Residue 113 to 116 (SLLP) participates in (6S)-5,6,7,8-tetrahydrofolate binding.

It belongs to the Fmt family.

The enzyme catalyses L-methionyl-tRNA(fMet) + (6R)-10-formyltetrahydrofolate = N-formyl-L-methionyl-tRNA(fMet) + (6S)-5,6,7,8-tetrahydrofolate + H(+). Functionally, attaches a formyl group to the free amino group of methionyl-tRNA(fMet). The formyl group appears to play a dual role in the initiator identity of N-formylmethionyl-tRNA by promoting its recognition by IF2 and preventing the misappropriation of this tRNA by the elongation apparatus. The chain is Methionyl-tRNA formyltransferase from Edwardsiella ictaluri (strain 93-146).